The sequence spans 267 residues: B3 domain-containing protein Os02g0455800 (267 aa).

The segment at residues 30–131 (EKFLMPSDLC…RLFICCRLGT (102 aa)) is a DNA-binding region (TF-B3). The interval 172 to 221 (QARLHDGNQDGGGAPSRHVPSSGRRVEAQLSRVSSRRQRRTMKHSIPEPT) is disordered. Positions 205 to 214 (SSRRQRRTMK) are enriched in basic residues.

It is found in the nucleus. This Oryza sativa subsp. japonica (Rice) protein is B3 domain-containing protein Os02g0455800.